A 149-amino-acid chain; its full sequence is Probable cyclic pyranopterin monophosphate synthase (149 aa).

Residues Leu67–His69 and Met103–Glu104 each bind substrate. Residue Asp118 is part of the active site.

The protein belongs to the MoaC family. Homohexamer; trimer of dimers.

The catalysed reaction is (8S)-3',8-cyclo-7,8-dihydroguanosine 5'-triphosphate = cyclic pyranopterin phosphate + diphosphate. Its pathway is cofactor biosynthesis; molybdopterin biosynthesis. Catalyzes the conversion of (8S)-3',8-cyclo-7,8-dihydroguanosine 5'-triphosphate to cyclic pyranopterin monophosphate (cPMP). The chain is Probable cyclic pyranopterin monophosphate synthase from Saccharolobus solfataricus (strain ATCC 35092 / DSM 1617 / JCM 11322 / P2) (Sulfolobus solfataricus).